A 331-amino-acid polypeptide reads, in one-letter code: MSTSAPNTNELNSPVLETQPLAGDAALLHSSIADGYEEIIRAPFDYLLNLPGKDVRSKMISAFNQWLCIPADKLEVIKRIVMLLHNASLLIDDIQDSSKLRRGLPVSHHIFGVPQTINAANYAYFLAQQELPKLGDPKAFEIYTEELLSLHRGQGMDIYWREASKCPTEEEYFSMVSHKTGGLFRLAIRLMQLASDKNCDFVPLVNVLGVIFQIRDDYLNLQSHAYTVNKGFGEDLTEGKYSFPIIHSIRSDPTNIQLSSILKQRTTDVDVKLFAVECIKATGSFEHCKEKIAELVAEARQLIKEMGNSVPGSAEAVDRVLDLIGLEPESS.

Positions 53, 56, and 85 each coordinate isopentenyl diphosphate. The Mg(2+) site is built by Asp92 and Asp96. Arg101 is a binding site for dimethylallyl diphosphate. Position 102 (Arg102) interacts with isopentenyl diphosphate. Dimethylallyl diphosphate contacts are provided by Lys179, Thr180, and Gln213. Asp216 is a binding site for Mg(2+). Positions 220, 230, and 240 each coordinate dimethylallyl diphosphate.

This sequence belongs to the FPP/GGPP synthase family. The cofactor is Mg(2+).

It carries out the reaction isopentenyl diphosphate + dimethylallyl diphosphate = (2E)-geranyl diphosphate + diphosphate. It catalyses the reaction isopentenyl diphosphate + (2E)-geranyl diphosphate = (2E,6E)-farnesyl diphosphate + diphosphate. The catalysed reaction is isopentenyl diphosphate + (2E,6E)-farnesyl diphosphate = (2E,6E,10E)-geranylgeranyl diphosphate + diphosphate. It functions in the pathway secondary metabolite biosynthesis; terpenoid biosynthesis. Geranylgeranyl pyrophosphate synthase; part of the gene cluster that mediates the biosynthesis of the diterpenoid pyrones subglutinols A and B. The first step of the pathway is the synthesis of the alpha-pyrone moiety by the polyketide synthase dpmaA via condensation of one acetyl-CoA starter unit with 3 malonyl-CoA units and 2 methylations. The alpha-pyrone is then combined with geranylgeranyl pyrophosphate (GGPP) formed by the GGPP synthase dpmaD through the action of the prenyltransferase dpmaC to yield a linear alpha-pyrone diterpenoid. Subsequent steps in the diterpenoid pyrone biosynthetic pathway involve the decalin core formation, which is initiated by the epoxidation of the C10-C11 olefin by the FAD-dependent oxidoreductase dpmaE, and is followed by a cyclization cascade catalyzed by the terpene cyclase dpmaB. The dehydrogenase dpmaF is then involved in tetrahydrofuran (THF) ring formation at the C5 unit to complete the formation of subglutinols A and B. In Metarhizium anisopliae (Entomophthora anisopliae), this protein is Geranylgeranyl pyrophosphate synthase dpmaD.